A 508-amino-acid polypeptide reads, in one-letter code: MKLYQWQIFRWFFETLNCSLGRAYKASKRIQYIKKDYSFYKNTILFSKGSWQAINLYTNTELRNTLFIIYWSLLEYRISLCFLNLLRKIESIQFKKLSVISFILNLHSSLSHVNKQLQILSKVLFDRFYFYLWKNMYFSLLLHNSLSRFVKESIEESEQSGFNNENKKDFQDETYFVLNESLEKDFSRIREMNRKLAWIEVTLNDLNTWKSYYLFFPFLSEMKNTPQNESSFKLKNFEITTPAYDSTGFIPRSISRTLSRFQIELMGQSSSLVLQEFRSAKYQALASIQYIGCLIFLPWIISRSLKEWFLEPWIKFWWDTYQSQISLNSFQEERASEGLQEVEEPLWLDKLVSNFLKNQSQDLNIEIYGETIQLIRMYNENSIQTILHLLTGMICFTTLGALFILGKKRLSVLNSWIQESFYSLSDTMKAFAILLLTDLCIGFHSPHGWEVVIGSSLEHLGFAHNKHIISCFVSTFPVILDTVSKYWIFRHLNRISPSIVATYHTMNE.

Transmembrane regions (helical) follow at residues 66–86 (LFII…LNLL), 282–302 (YQAL…WIIS), 386–406 (ILHL…FILG), 433–453 (ILLL…EVVI), and 468–488 (IISC…KYWI).

It belongs to the CemA family.

The protein resides in the plastid. Its subcellular location is the chloroplast inner membrane. The catalysed reaction is K(+)(in) + H(+)(out) = K(+)(out) + H(+)(in). In terms of biological role, contributes to K(+)/H(+) antiport activity by supporting proton efflux to control proton extrusion and homeostasis in chloroplasts in a light-dependent manner to modulate photosynthesis. Prevents excessive induction of non-photochemical quenching (NPQ) under continuous-light conditions. Indirectly promotes efficient inorganic carbon uptake into chloroplasts. The chain is Potassium/proton antiporter CemA from Anthoceros angustus (Hornwort).